Here is a 692-residue protein sequence, read N- to C-terminus: Glycine--tRNA ligase beta subunit (692 aa).

Belongs to the class-II aminoacyl-tRNA synthetase family. Tetramer of two alpha and two beta subunits.

It is found in the cytoplasm. It carries out the reaction tRNA(Gly) + glycine + ATP = glycyl-tRNA(Gly) + AMP + diphosphate. The protein is Glycine--tRNA ligase beta subunit of Limosilactobacillus fermentum (strain NBRC 3956 / LMG 18251) (Lactobacillus fermentum).